Consider the following 109-residue polypeptide: Nucleoid-associated protein VV2410 (109 aa).

Residues 1–22 (MFGKGGMGNLMKQAQQMQERMQ) form a disordered region.

This sequence belongs to the YbaB/EbfC family. As to quaternary structure, homodimer.

Its subcellular location is the cytoplasm. It is found in the nucleoid. In terms of biological role, binds to DNA and alters its conformation. May be involved in regulation of gene expression, nucleoid organization and DNA protection. The protein is Nucleoid-associated protein VV2410 of Vibrio vulnificus (strain YJ016).